Consider the following 388-residue polypeptide: Na(+)/H(+) antiporter NhaA (388 aa).

The Cytoplasmic segment spans residues 1-11 (MKHLHRFFSSD). The helical transmembrane segment at 12-31 (ASGGIILIIAAVLAMIMANS) threads the bilayer. At 32-58 (GATSGWYHDFLETPVQLRVGTLEINKN) the chain is on the periplasmic side. The helical transmembrane segment at 59-80 (MLLWINDALMAVFFLLVGLEVK) threads the bilayer. Residues 81-96 (RELMQGSLASLRQAAF) lie on the Cytoplasmic side of the membrane. The helical transmembrane segment at 97–116 (PVIAAIGGMIVPALLYLAFN) threads the bilayer. Over 117–122 (YADPIT) the chain is Periplasmic. A helical membrane pass occupies residues 123–130 (REGWAIPA). The Cytoplasmic segment spans residues 131 to 154 (ATDIAFALGVLALLGSRVPLALKI). Residues 155–176 (FLMALAIIDDLGAIIIIALFYT) form a helical membrane-spanning segment. Residues 177-180 (NDLS) are Periplasmic-facing. A helical transmembrane segment spans residues 181–200 (MASLGVAAVAIAVLAVLNLC). Over 201–204 (GVRR) the chain is Cytoplasmic. Residues 205–222 (TGVYILVGVVLWTAVLKS) form a helical membrane-spanning segment. Residue glycine 223 is a topological domain, periplasmic. A helical membrane pass occupies residues 224–236 (VHATLAGVIVGFF). The Cytoplasmic portion of the chain corresponds to 237-253 (IPLKEKHGRSPAKRLEH). The chain crosses the membrane as a helical span at residues 254–272 (VLHPWVAYLILPLFAFANA). Residues 273–286 (GVSLQGVTLEGLTS) are Periplasmic-facing. Residues 287–310 (ILPLGIIAGLLIGKPLGISLFCWL) form a helical membrane-spanning segment. The Cytoplasmic segment spans residues 311 to 339 (ALRLKLAHLPEGTTYQQIMAVGILCGIGF). A helical transmembrane segment spans residues 340-350 (TMSIFIASLAF). The Periplasmic segment spans residues 351 to 357 (GSVDPEL). Residues 358–380 (INWAKLGILVGSISSAVIGYSWL) form a helical membrane-spanning segment. Over 381–388 (RVRLRPSV) the chain is Cytoplasmic.

The protein belongs to the NhaA Na(+)/H(+) (TC 2.A.33) antiporter family.

It localises to the cell inner membrane. It catalyses the reaction Na(+)(in) + 2 H(+)(out) = Na(+)(out) + 2 H(+)(in). Functionally, na(+)/H(+) antiporter that extrudes sodium in exchange for external protons. In Escherichia coli O6:K15:H31 (strain 536 / UPEC), this protein is Na(+)/H(+) antiporter NhaA.